A 238-amino-acid polypeptide reads, in one-letter code: Putative ABC transporter ATP-binding protein AF_1841 (238 aa).

The region spanning 8-238 (IEADSVSYDY…EELLEKAGVI (231 aa)) is the ABC transporter domain. 41 to 48 (GANGSGKS) provides a ligand contact to ATP.

The protein belongs to the ABC transporter superfamily.

The protein localises to the cell membrane. Functionally, probably part of an ABC transporter complex. Responsible for energy coupling to the transport system. This chain is Putative ABC transporter ATP-binding protein AF_1841, found in Archaeoglobus fulgidus (strain ATCC 49558 / DSM 4304 / JCM 9628 / NBRC 100126 / VC-16).